We begin with the raw amino-acid sequence, 820 residues long: Mitogen-activated protein kinase kinase kinase kinase 2 (820 aa).

One can recognise a Protein kinase domain in the interval 16-273 (FELLQRVGAG…AEKLLQHPFT (258 aa)). Residues 22-30 (VGAGTYGDV) and Lys45 contribute to the ATP site. The Proton acceptor role is filled by Asp136. The PEST1 stretch occupies residues 294-314 (LGTPSPEDCELETYDMFPDTI). At Ser328 the chain carries Phosphoserine. The tract at residues 344 to 360 (ETDPLNEPWEEEWTLLG) is PEST2. Positions 387–442 (SEFQELDSPDDTMGTIKRAPFLGPLPTDPPAEEPLSSPPGTLPPPPSGPNSSPLLP) are disordered. At Ser394 the chain carries Phosphoserine. Residues 405–448 (APFLGPLPTDPPAEEPLSSPPGTLPPPPSGPNSSPLLPTAWATM) form a PEST3 region. A compositionally biased stretch (pro residues) spans 422–434 (SSPPGTLPPPPSG). Residues 482 to 793 (PLRIHAAVTW…IFRVLGAHRD (312 aa)) enclose the CNH domain.

This sequence belongs to the protein kinase superfamily. STE Ser/Thr protein kinase family. STE20 subfamily. As to quaternary structure, interacts with TRAF2, TRAF6, MAP3K1/MEKK1 and MAP3K11/MLK3. Interacts with RAB8A. Mg(2+) serves as cofactor. Post-translationally, polyubiquitinated through 'Lys-48'-polyubiquitin chains, allowing proteasomal turnover. Ubiquitination requires the kinase activity of MAP4K2/GCK. Autophosphorylated in response to tumor necrosis factor (TNF), endotoxins or pro-inflammatory stimuli. Autophosphorylation leads to activation. Highly expressed in germinal center but not mantle zone B-cells. Also expressed in lung, brain and placenta and at lower levels in other tissues examined.

The protein localises to the cytoplasm. It localises to the basolateral cell membrane. The protein resides in the golgi apparatus membrane. It carries out the reaction L-seryl-[protein] + ATP = O-phospho-L-seryl-[protein] + ADP + H(+). The catalysed reaction is L-threonyl-[protein] + ATP = O-phospho-L-threonyl-[protein] + ADP + H(+). The tumor necrosis factor (TNF), as well as endotoxins and pro-inflammatory stimuli such as polyinosine-polycytidine (poly(IC)), lipopolysaccharides (LPS), peptidoglycan (PGN), flagellin, or lipid A activate MAP4K2 by promoting its autophosphorylation. Serine/threonine-protein kinase which acts as an essential component of the MAP kinase signal transduction pathway. Acts as a MAPK kinase kinase kinase (MAP4K) and is an upstream activator of the stress-activated protein kinase/c-Jun N-terminal kinase (SAP/JNK) signaling pathway and to a lesser extent of the p38 MAPKs signaling pathway. Required for the efficient activation of JNKs by TRAF6-dependent stimuli, including pathogen-associated molecular patterns (PAMPs) such as polyinosine-polycytidine (poly(IC)), lipopolysaccharides (LPS), lipid A, peptidoglycan (PGN), or bacterial flagellin. To a lesser degree, IL-1 and engagement of CD40 also stimulate MAP4K2-mediated JNKs activation. The requirement for MAP4K2/GCK is most pronounced for LPS signaling, and extends to LPS stimulation of c-Jun phosphorylation and induction of IL-8. Enhances MAP3K1 oligomerization, which may relieve N-terminal mediated MAP3K1 autoinhibition and lead to activation following autophosphorylation. Also mediates the SAP/JNK signaling pathway and the p38 MAPKs signaling pathway through activation of the MAP3Ks MAP3K10/MLK2 and MAP3K11/MLK3. May play a role in the regulation of vesicle targeting or fusion. regulation of vesicle targeting or fusion. Activator of the Hippo signaling pathway which plays a pivotal role in organ size control and tumor suppression by restricting proliferation and promoting apoptosis. MAP4Ks act in parallel to and are partially redundant with STK3/MST2 and STK4/MST2 in the phosphorylation and activation of LATS1/2, and establish MAP4Ks as components of the expanded Hippo pathway. The chain is Mitogen-activated protein kinase kinase kinase kinase 2 from Homo sapiens (Human).